The chain runs to 268 residues: Glutamate racemase (268 aa).

Substrate-binding positions include 9 to 10 (DS) and 41 to 42 (YG). Residue Cys-73 is the Proton donor/acceptor of the active site. 74 to 75 (NS) provides a ligand contact to substrate. Cys-183 functions as the Proton donor/acceptor in the catalytic mechanism. 184 to 185 (TH) is a binding site for substrate.

The protein belongs to the aspartate/glutamate racemases family.

The enzyme catalyses L-glutamate = D-glutamate. The protein operates within cell wall biogenesis; peptidoglycan biosynthesis. In terms of biological role, provides the (R)-glutamate required for cell wall biosynthesis. This chain is Glutamate racemase, found in Shewanella piezotolerans (strain WP3 / JCM 13877).